The sequence spans 627 residues: MACPF domain-containing protein At1g14780 (627 aa).

One can recognise an MACPF domain in the interval 1–339; the sequence is MSRDGGDVIE…PPLMDLQYFL (339 aa).

It belongs to the complement C6/C7/C8/C9 (TC 1.C.39) family.

Its function is as follows. Negatively controls the salicylic acid (SA)-mediated pathway of programmed cell death in plant immunity. This chain is MACPF domain-containing protein At1g14780, found in Arabidopsis thaliana (Mouse-ear cress).